The following is a 68-amino-acid chain: Large ribosomal subunit protein bL33c (68 aa).

This sequence belongs to the bacterial ribosomal protein bL33 family.

Its subcellular location is the plastid. It localises to the chloroplast. In Amborella trichopoda, this protein is Large ribosomal subunit protein bL33c.